Reading from the N-terminus, the 447-residue chain is tRNA-2-methylthio-N(6)-dimethylallyladenosine synthase (447 aa).

One can recognise an MTTase N-terminal domain in the interval 14-130 (KKVYIRTFGC…LPAMIANAGQ (117 aa)). Cys-23, Cys-59, Cys-93, Cys-166, Cys-170, and Cys-173 together coordinate [4Fe-4S] cluster. The Radical SAM core domain occupies 152-382 (RSGTISAFIP…IALQGSISGE (231 aa)). Residues 385-447 (AAEVGAVVEV…TPATLIGTPA (63 aa)) enclose the TRAM domain.

It belongs to the methylthiotransferase family. MiaB subfamily. In terms of assembly, monomer. Requires [4Fe-4S] cluster as cofactor.

The protein localises to the cytoplasm. It carries out the reaction N(6)-dimethylallyladenosine(37) in tRNA + (sulfur carrier)-SH + AH2 + 2 S-adenosyl-L-methionine = 2-methylsulfanyl-N(6)-dimethylallyladenosine(37) in tRNA + (sulfur carrier)-H + 5'-deoxyadenosine + L-methionine + A + S-adenosyl-L-homocysteine + 2 H(+). Functionally, catalyzes the methylthiolation of N6-(dimethylallyl)adenosine (i(6)A), leading to the formation of 2-methylthio-N6-(dimethylallyl)adenosine (ms(2)i(6)A) at position 37 in tRNAs that read codons beginning with uridine. In Chlorobium phaeobacteroides (strain BS1), this protein is tRNA-2-methylthio-N(6)-dimethylallyladenosine synthase.